A 47-amino-acid polypeptide reads, in one-letter code: Potassium channel toxin TcoKIK (47 aa).

Residues 14–47 (EYACPAIDKFCEDHCAAKKAVGKCDDFKCNCIKL) enclose the BetaSPN-type CS-alpha/beta domain. Disulfide bonds link C17–C37, C24–C42, and C28–C44.

Belongs to the long chain scorpion toxin family. Class 2 subfamily. As to expression, expressed by the venom gland.

Its subcellular location is the secreted. The protein resides in the target cell membrane. Functionally, blocks voltage-gated potassium channels. Its application (10 uM) to cells recombinantly expressing channels results in membrane damage and cell lysis. This is Potassium channel toxin TcoKIK from Tityus costatus (Brazilian scorpion).